A 526-amino-acid polypeptide reads, in one-letter code: mRNA export factor ICP27 homolog (526 aa).

Zn(2+) is bound by residues Cys239, His344, Cys346, and Cys351. The segment at 239-351 (CVFNDNGHGD…NNHQCDDIGC (113 aa)) adopts a CHC2-type zinc-finger fold.

This sequence belongs to the HHV-1 ICP27 protein family.

It localises to the virion tegument. The protein resides in the virion. The protein localises to the host nucleus. Its subcellular location is the host cytoplasm. In terms of biological role, immediate early (EI) protein that plays many roles during productive infection including regulation of viral gene expression and nuclear export of intronless viral RNAs. The sequence is that of mRNA export factor ICP27 homolog from Human herpesvirus 7 (strain JI) (HHV-7).